The following is a 142-amino-acid chain: HTH-type transcriptional regulator MntR (142 aa).

The HTH dtxR-type domain occupies 1–63; it reads MPTPSMEDYI…YEKYRGLILT (63 aa). Asp8, Glu11, His77, Glu99, Glu102, and His103 together coordinate Mn(2+).

Belongs to the DtxR/MntR family. Homodimer.

The protein resides in the cytoplasm. With respect to regulation, DNA binding is strongly activated by Mn(2+). Central regulator of manganese homeostasis. This Listeria welshimeri serovar 6b (strain ATCC 35897 / DSM 20650 / CCUG 15529 / CIP 8149 / NCTC 11857 / SLCC 5334 / V8) protein is HTH-type transcriptional regulator MntR.